The chain runs to 669 residues: Glycine--tRNA ligase beta subunit (669 aa).

The protein belongs to the class-II aminoacyl-tRNA synthetase family. Tetramer of two alpha and two beta subunits.

The protein localises to the cytoplasm. The catalysed reaction is tRNA(Gly) + glycine + ATP = glycyl-tRNA(Gly) + AMP + diphosphate. This is Glycine--tRNA ligase beta subunit from Phenylobacterium zucineum (strain HLK1).